A 122-amino-acid polypeptide reads, in one-letter code: UPF0102 protein R00337 (122 aa).

The protein belongs to the UPF0102 family.

This Rhizobium meliloti (strain 1021) (Ensifer meliloti) protein is UPF0102 protein R00337.